The primary structure comprises 197 residues: Putative methyltransferase Mtx subunit A (197 aa).

It belongs to the MtrA family. May be part of a complex composed of 3 subunits; MtxA, MtxH and MtxX.

This is Putative methyltransferase Mtx subunit A (mtxA) from Methanosarcina barkeri (strain Fusaro / DSM 804).